The following is a 1465-amino-acid chain: Protein clueless (1465 aa).

Residues 1–87 form a disordered region; the sequence is MALEIDAKNA…SNGHSENGDA (87 aa). A compositionally biased stretch (low complexity) spans 30-51; it reads HNNNNNAPAAGEKNLVNGSSAA. Basic residues predominate over residues 52–61; that stretch reads TKKKGKKNRN. Ser-273 carries the phosphoserine modification. One can recognise a Clu domain in the interval 427–669; it reads RAEDAFSSKL…RTFPPDVNFL (243 aa). A compositionally biased stretch (basic and acidic residues) spans 742 to 767; that stretch reads AEKQEEPNEEQPEKTEEQPAEKEESK. Disordered stretches follow at residues 742–776 and 962–1021; these read AEKQEEPNEEQPEKTEEQPAEKEESKPTPSETKSA and VSSD…SNSD. The span at 970–986 shows a compositional bias: basic residues; it reads KQPRNNSGKHNKHKAAK. Composition is skewed to low complexity over residues 987 to 1003 and 1010 to 1020; these read ASKPQAAAAQNGNATAA and ATTSGATSSNS. TPR repeat units lie at residues 1114-1147, 1240-1273, and 1275-1308; these read AYNFYTTGQAKIQQGMLKEGYELISEALNLLNNV, ALIDSNISLILHALGEYELSLRFIEHALKLNLKY, and GNKAMHVAVSYHLMARIQSCMGDFRSALNNEKET. Residues 1428 to 1465 form a disordered region; that stretch reads NNNDNASETEQPKDEASAAGTPTQLTNGSEESTATVSS. Positions 1447 to 1465 are enriched in polar residues; it reads GTPTQLTNGSEESTATVSS.

This sequence belongs to the CLU family.

Its subcellular location is the cytoplasm. Functionally, mRNA-binding protein involved in proper cytoplasmic distribution of mitochondria. This Drosophila virilis (Fruit fly) protein is Protein clueless.